The sequence spans 298 residues: Pyridoxal 5'-phosphate synthase subunit PdxS (298 aa).

A D-ribose 5-phosphate-binding site is contributed by D24. K81 functions as the Schiff-base intermediate with D-ribose 5-phosphate in the catalytic mechanism. D-ribose 5-phosphate is bound at residue G153. D-glyceraldehyde 3-phosphate is bound at residue R165. Residues G214 and 235 to 236 (GS) each bind D-ribose 5-phosphate.

The protein belongs to the PdxS/SNZ family. In terms of assembly, in the presence of PdxT, forms a dodecamer of heterodimers.

The catalysed reaction is aldehydo-D-ribose 5-phosphate + D-glyceraldehyde 3-phosphate + L-glutamine = pyridoxal 5'-phosphate + L-glutamate + phosphate + 3 H2O + H(+). Its pathway is cofactor biosynthesis; pyridoxal 5'-phosphate biosynthesis. Catalyzes the formation of pyridoxal 5'-phosphate from ribose 5-phosphate (RBP), glyceraldehyde 3-phosphate (G3P) and ammonia. The ammonia is provided by the PdxT subunit. Can also use ribulose 5-phosphate and dihydroxyacetone phosphate as substrates, resulting from enzyme-catalyzed isomerization of RBP and G3P, respectively. In Halalkalibacterium halodurans (strain ATCC BAA-125 / DSM 18197 / FERM 7344 / JCM 9153 / C-125) (Bacillus halodurans), this protein is Pyridoxal 5'-phosphate synthase subunit PdxS.